The chain runs to 79 residues: Peptide Im-5 (79 aa).

Residues 1–23 (MKYRKQLLVLFFAYFLVVNESEA) form the signal peptide. Residues 49–79 (RALMKRDLQDRMDPYQRNLKLDRYLKQLALD) constitute a propeptide that is removed on maturation.

Belongs to the non-disulfide-bridged peptide (NDBP) superfamily. Medium-length antimicrobial peptide (group 3) family. As to expression, expressed by the venom gland.

It is found in the secreted. Its subcellular location is the target cell membrane. In terms of biological role, antimicrobial peptide that may act by disrupting the integrity of the bacterial cell membrane. Has antibacterial activity against Gram-negative bacterium E.coli NBRC 3972 (MIC=10 uM) and against Gram-positive bacteria S.aureus NBRC 13276 (MIC=2.5-5 uM) and B.subtilis NBRC 3009 (MIC=0.5-1 uM). Also shows potent activity against antibiotic-sensitive and -resistant Acinetobacter baumannii (MIC=1.8-3.6 uM). Shows cytolytic activity against human and sheep erythrocytes. Toxic to cricket A.domestica. The polypeptide is Peptide Im-5 (Isometrus maculatus (Lesser brown scorpion)).